We begin with the raw amino-acid sequence, 556 residues long: 2-succinyl-5-enolpyruvyl-6-hydroxy-3-cyclohexene-1-carboxylate synthase (556 aa).

It belongs to the TPP enzyme family. MenD subfamily. In terms of assembly, homodimer. Mg(2+) serves as cofactor. It depends on Mn(2+) as a cofactor. Requires thiamine diphosphate as cofactor.

It catalyses the reaction isochorismate + 2-oxoglutarate + H(+) = 5-enolpyruvoyl-6-hydroxy-2-succinyl-cyclohex-3-ene-1-carboxylate + CO2. Its pathway is quinol/quinone metabolism; 1,4-dihydroxy-2-naphthoate biosynthesis; 1,4-dihydroxy-2-naphthoate from chorismate: step 2/7. It participates in quinol/quinone metabolism; menaquinone biosynthesis. Catalyzes the thiamine diphosphate-dependent decarboxylation of 2-oxoglutarate and the subsequent addition of the resulting succinic semialdehyde-thiamine pyrophosphate anion to isochorismate to yield 2-succinyl-5-enolpyruvyl-6-hydroxy-3-cyclohexene-1-carboxylate (SEPHCHC). This is 2-succinyl-5-enolpyruvyl-6-hydroxy-3-cyclohexene-1-carboxylate synthase from Staphylococcus haemolyticus (strain JCSC1435).